We begin with the raw amino-acid sequence, 281 residues long: Fibrinogen-like protein 1-like protein (281 aa).

An N-terminal signal peptide occupies residues 1 to 33 (MGLQAGTRQLHGNLILLPVAVVMLLLCTSPVCA). Residues 34 to 246 (TASVGLPADC…RPSSWSNPPM (213 aa)) enclose the Fibrinogen C-terminal domain. Disulfide bonds link Cys43–Cys69 and Cys201–Cys213. The segment covering 260–269 (PSRSPSLPSP) has biased composition (low complexity). A disordered region spans residues 260 to 281 (PSRSPSLPSPITATHTVRNQLQ). Residues 270–281 (ITATHTVRNQLQ) are compositionally biased toward polar residues.

In terms of tissue distribution, expressed in smal intestine, colon and lung.

Shows a cytidine deaminase activity on 2'-deoxycytidine (in vitro), however shows no RNA editing activity (in vitro). In Gallus gallus (Chicken), this protein is Fibrinogen-like protein 1-like protein.